The following is a 178-amino-acid chain: Large ribosomal subunit protein uL10 (178 aa).

The protein belongs to the universal ribosomal protein uL10 family. Part of the ribosomal stalk of the 50S ribosomal subunit. The N-terminus interacts with L11 and the large rRNA to form the base of the stalk. The C-terminus forms an elongated spine to which L12 dimers bind in a sequential fashion forming a multimeric L10(L12)X complex.

Its function is as follows. Forms part of the ribosomal stalk, playing a central role in the interaction of the ribosome with GTP-bound translation factors. The sequence is that of Large ribosomal subunit protein uL10 from Thermosynechococcus vestitus (strain NIES-2133 / IAM M-273 / BP-1).